The following is a 453-amino-acid chain: Gamma-aminobutyric acid receptor subunit alpha-6 (453 aa).

The signal sequence occupies residues 1 to 19 (MASSLPWLCIILWLENALG). Over 20–243 (KLEVEGNFYS…FHLQRKMGYF (224 aa)) the chain is Extracellular. N-linked (GlcNAc...) asparagine glycosylation is present at N31. Residue R84 coordinates 4-aminobutanoate. N-linked (GlcNAc...) asparagine glycans are attached at residues N128 and N141. A 4-aminobutanoate-binding site is contributed by T147. C156 and C170 are disulfide-bonded. The chain crosses the membrane as a helical span at residues 244–264 (MIQIYTPCIMTVILSQVSFWI). The Cytoplasmic portion of the chain corresponds to 265 to 270 (NKESVP). A helical membrane pass occupies residues 271–290 (ARTVFGITTVLTMTTLSISA). The Extracellular portion of the chain corresponds to 291 to 304 (RHSLPKVSYATAMD). Residues 305-325 (WFIAVCFAFVFSALIEFAAVN) traverse the membrane as a helical segment. Over 326-422 (YFTNLQTQKA…GTSKIDQYSR (97 aa)) the chain is Cytoplasmic. T403 is modified (phosphothreonine). Residues 423 to 443 (ILFPVAFAGFNLVYWVVYLSK) traverse the membrane as a helical segment. Residues 444-453 (DTMEVSSSVE) are Extracellular-facing.

This sequence belongs to the ligand-gated ion channel (TC 1.A.9) family. Gamma-aminobutyric acid receptor (TC 1.A.9.5) subfamily. GABRA6 sub-subfamily. Heteropentamer, formed by a combination of alpha (GABRA1-6), beta (GABRB1-3), gamma (GABRG1-3), delta (GABRD), epsilon (GABRE), rho (GABRR1-3), pi (GABRP) and theta (GABRQ) chains, each subunit exhibiting distinct physiological and pharmacological properties. Binds UBQLN1. As to expression, expressed in brain, in cerebellar granule cells.

It localises to the postsynaptic cell membrane. The protein localises to the cell membrane. It carries out the reaction chloride(in) = chloride(out). Functionally, alpha subunit of the heteropentameric ligand-gated chloride channel gated by gamma-aminobutyric acid (GABA), a major inhibitory neurotransmitter in the brain. GABA-gated chloride channels, also named GABA(A) receptors (GABAAR), consist of five subunits arranged around a central pore and contain GABA active binding site(s) located at the alpha and beta subunit interface(s). When activated by GABA, GABAARs selectively allow the flow of chloride anions across the cell membrane down their electrochemical gradient. Alpha-6/GABRA6 subunits are found at both synaptic and extrasynaptic sites. Chloride influx into the postsynaptic neuron following GABAAR opening decreases the neuron ability to generate a new action potential, thereby reducing nerve transmission. Extrasynaptic alpha-6-containing receptors contribute to the tonic GABAergic inhibition. Alpha-6 subunits are also present on glutamatergic synapses. This Homo sapiens (Human) protein is Gamma-aminobutyric acid receptor subunit alpha-6.